The following is a 163-amino-acid chain: Neurotrophin-3 (163 aa).

The signal sequence occupies residues 1-3 (IQS). A propeptide spanning residues 4 to 119 (TSMDQGILTE…VLNRTSRRKR (116 aa)) is cleaved from the precursor. The interval 35-61 (KQTARTKDGTQTTVKKSEAEADATASQ) is disordered. An N-linked (GlcNAc...) asparagine glycan is attached at Asn-112.

Belongs to the NGF-beta family.

Its subcellular location is the secreted. Seems to promote the survival of visceral and proprioceptive sensory neurons. The polypeptide is Neurotrophin-3 (NTF3) (Corallus caninus (Emerald tree boa)).